A 213-amino-acid polypeptide reads, in one-letter code: 5-oxoprolinase subunit B (213 aa).

Belongs to the PxpB family. In terms of assembly, forms a complex composed of PxpA, PxpB and PxpC.

The enzyme catalyses 5-oxo-L-proline + ATP + 2 H2O = L-glutamate + ADP + phosphate + H(+). Catalyzes the cleavage of 5-oxoproline to form L-glutamate coupled to the hydrolysis of ATP to ADP and inorganic phosphate. This is 5-oxoprolinase subunit B from Haemophilus influenzae (strain ATCC 51907 / DSM 11121 / KW20 / Rd).